Here is a 65-residue protein sequence, read N- to C-terminus: MPKMKSHRGACKRFKATASGKIKRERMNGSHNLEKKNRKRTRRLHQSTMLDNATKEKQIKRMILA.

Residues 28–53 (NGSHNLEKKNRKRTRRLHQSTMLDNA) form a disordered region. Basic residues predominate over residues 36 to 45 (KNRKRTRRLH).

It belongs to the bacterial ribosomal protein bL35 family.

The polypeptide is Large ribosomal subunit protein bL35 (Chlorobium luteolum (strain DSM 273 / BCRC 81028 / 2530) (Pelodictyon luteolum)).